The primary structure comprises 365 residues: Pre-small/secreted glycoprotein (365 aa).

The N-terminal stretch at M1–S32 is a signal peptide. The N-linked (GlcNAc...) asparagine; by host glycan is linked to N40. 2 cysteine pairs are disulfide-bonded: C108-C135 and C121-C147. N-linked (GlcNAc...) asparagine; by host glycosylation is found at N204, N228, N257, and N268.

This sequence belongs to the filoviruses glycoprotein family. In terms of assembly, homodimer; disulfide-linked. The homodimers are linked by two disulfide bonds in a parallel orientation. Monomer. In terms of processing, this precursor is processed into mature sGP and delta-peptide by host furin or furin-like proteases. The cleavage site corresponds to the furin optimal cleavage sequence [KR]-X-[KR]-R. Post-translationally, N-glycosylated. O-glycosylated.

The protein resides in the secreted. Functionally, seems to possess an anti-inflammatory activity as it can reverse the barrier-decreasing effects of TNF alpha. Might therefore contribute to the lack of inflammatory reaction seen during infection in spite the of extensive necrosis and massive virus production. Does not seem to be involved in activation of primary macrophages. Does not seem to interact specifically with neutrophils. Viroporin that permeabilizes mammalian cell plasma membranes. It acts by altering permeation of ionic compounds and small molecules. This activity may lead to viral enterotoxic activity. The sequence is that of Pre-small/secreted glycoprotein (GP) from Epomops franqueti (Franquet's epauletted fruit bat).